Reading from the N-terminus, the 165-residue chain is Large ribosomal subunit protein uL11A (165 aa).

A N,N-dimethylproline; by NTM1 modification is found at Pro-2. N6,N6,N6-trimethyllysine; by RKM2 is present on residues Lys-4 and Lys-11. 2 positions are modified to phosphoserine: Ser-25 and Ser-38. An N5-methylarginine; by RMT2 modification is found at Arg-67. Residues Lys-130 and Lys-146 each participate in a glycyl lysine isopeptide (Lys-Gly) (interchain with G-Cter in ubiquitin) cross-link.

This sequence belongs to the universal ribosomal protein uL11 family. Component of the large ribosomal subunit (LSU). Mature yeast ribosomes consist of a small (40S) and a large (60S) subunit. The 40S small subunit contains 1 molecule of ribosomal RNA (18S rRNA) and 33 different proteins (encoded by 57 genes). The large 60S subunit contains 3 rRNA molecules (25S, 5.8S and 5S rRNA) and 46 different proteins (encoded by 81 genes). In terms of processing, it appears that the main modified species for L12 contains 6 methyl groups, 2 on Pro-2, 3 on Lys-4 and 1 on Arg-67. Although not reproduced with a second method, methylation at Lys-11 cannot be ruled out.

The protein localises to the cytoplasm. In terms of biological role, component of the ribosome, a large ribonucleoprotein complex responsible for the synthesis of proteins in the cell. The small ribosomal subunit (SSU) binds messenger RNAs (mRNAs) and translates the encoded message by selecting cognate aminoacyl-transfer RNA (tRNA) molecules. The large subunit (LSU) contains the ribosomal catalytic site termed the peptidyl transferase center (PTC), which catalyzes the formation of peptide bonds, thereby polymerizing the amino acids delivered by tRNAs into a polypeptide chain. The nascent polypeptides leave the ribosome through a tunnel in the LSU and interact with protein factors that function in enzymatic processing, targeting, and the membrane insertion of nascent chains at the exit of the ribosomal tunnel. The protein is Large ribosomal subunit protein uL11A of Saccharomyces cerevisiae (strain ATCC 204508 / S288c) (Baker's yeast).